Here is a 1157-residue protein sequence, read N- to C-terminus: Hephaestin (1157 aa).

The signal sequence occupies residues 1–23 (MKAGHLLWALLLMHSLCSLPTDG). Plastocyanin-like domains follow at residues 24-206 (AIRN…LITC), 218-366 (QRKD…VDSC), 370-559 (PPVE…LLVC), 569-717 (KQKG…VSQC), 730-902 (ASRV…LVIC), and 910-1066 (NGGR…SHEE). Over 24–1109 (AIRNYYLGIQ…PVKNVEILSS (1086 aa)) the chain is Extracellular. Asn49 and Asn54 each carry an N-linked (GlcNAc...) asparagine glycan. Gly70 and Tyr73 together coordinate Na(+). 2 residues coordinate Cu(2+): His126 and His128. O2 is bound at residue His126. Positions 134, 152, and 153 each coordinate Ca(2+). An N-linked (GlcNAc...) asparagine glycan is attached at Asn164. Cysteines 180 and 206 form a disulfide. Residues His186 and His188 each contribute to the Cu(2+) site. An O2-binding site is contributed by His186. The N-linked (GlcNAc...) asparagine glycan is linked to Asn236. Ser265 contributes to the Na(+) binding site. A disulfide bridge connects residues Cys285 and Cys366. His304, Cys347, and His352 together coordinate Cu(2+). Residues Tyr416, Gly425, and Tyr428 each coordinate Na(+). Cysteines 533 and 559 form a disulfide. An N-linked (GlcNAc...) asparagine glycan is attached at Asn587. Ser616 lines the Na(+) pocket. A disulfide bridge links Cys636 with Cys717. Positions 655, 698, 703, and 708 each coordinate Cu(2+). N-linked (GlcNAc...) asparagine glycans are attached at residues Asn713 and Asn757. Na(+) contacts are provided by Phe768 and Gly777. Cysteines 876 and 902 form a disulfide. Asn930 carries an N-linked (GlcNAc...) asparagine glycan. Cu(2+) is bound by residues His999, His1002, His1004, His1044, Cys1045, His1046, His1050, and Met1055. 2 residues coordinate O2: His1002 and His1004. His1046 provides a ligand contact to O2. Residues 1110-1130 (ALIAICVVLLLIALALGGVVW) traverse the membrane as a helical segment. At 1131-1157 (YQHRQRKLRRNRRSILDDSFKLLSLKQ) the chain is on the cytoplasmic side. Residues Ser1144, Ser1149, and Ser1154 each carry the phosphoserine modification.

The protein belongs to the multicopper oxidase family. In terms of assembly, part of a complex composed of SLC40A1/ferroportin, TF/transferrin and HEPH/hephaestin that transfers iron from cells to transferrin. It depends on Cu cation as a cofactor. In terms of tissue distribution, highly expressed in small intestine and colon.

Its subcellular location is the basolateral cell membrane. It carries out the reaction 4 Fe(2+) + O2 + 4 H(+) = 4 Fe(3+) + 2 H2O. Plasma membrane ferroxidase that mediates the extracellular conversion of ferrous/Fe(2+) iron into its ferric/Fe(3+) form. Couples ferroportin which specifically exports ferrous/Fe(2+) iron from cells to transferrin that only binds and shuttles extracellular ferric/Fe(3+) iron throughout the body. By helping iron transfer from cells to blood mainly contributes to dietary iron absorption by the intestinal epithelium and more generally regulates iron levels in the body. This is Hephaestin from Rattus norvegicus (Rat).